A 506-amino-acid chain; its full sequence is Cysteine--tRNA ligase (506 aa).

Cysteine 34 lines the Zn(2+) pocket. A 'HIGH' region motif is present at residues 36 to 46; it reads PTVYDFAHIGN. Zn(2+) contacts are provided by cysteine 230, histidine 269, and glutamate 273. Positions 302–306 match the 'KMSKS' region motif; the sequence is KMSKS. Lysine 305 is an ATP binding site.

It belongs to the class-I aminoacyl-tRNA synthetase family. As to quaternary structure, monomer. The cofactor is Zn(2+).

The protein localises to the cytoplasm. The catalysed reaction is tRNA(Cys) + L-cysteine + ATP = L-cysteinyl-tRNA(Cys) + AMP + diphosphate. The sequence is that of Cysteine--tRNA ligase from Brucella ovis (strain ATCC 25840 / 63/290 / NCTC 10512).